The primary structure comprises 47 residues: Lysis protein for colicin E7 (47 aa).

A signal peptide spans 1–19; sequence MKKITGIILLLLAAIILAA. Cysteine 20 carries N-palmitoyl cysteine lipidation. The S-diacylglycerol cysteine moiety is linked to residue cysteine 20.

The protein localises to the cell outer membrane. Its function is as follows. Lysis proteins are required for both colicin release and partial cell lysis. The sequence is that of Lysis protein for colicin E7 (lys) from Escherichia coli.